The sequence spans 522 residues: Protein RCC2 (522 aa).

The segment at 1 to 83 (MPRKKAAAAA…TAGKAGGAAV (83 aa)) is disordered. Phosphoserine is present on Ser-16. The residue at position 20 (Thr-20) is a Phosphothreonine. The span at 24-36 (GPRKRGGPAGRKR) shows a compositional bias: basic residues. A phosphoserine mark is found at Ser-43, Ser-44, Ser-45, Ser-46, Ser-50, and Ser-51. The segment covering 71–82 (RPATAGKAGGAA) has biased composition (low complexity). N6-acetyllysine occurs at positions 92 and 124. RCC1 repeat units lie at residues 103 to 165 (KGQL…SLLI), 168 to 219 (EGKL…ALTE), 221 to 271 (GSVF…IMDC), 273 to 347 (GNLY…VLDS), 348 to 401 (QKRV…AVSE), 403 to 447 (GGLF…VAAD), and 448 to 501 (ESTI…VIAR). Lys-293 carries the post-translational modification N6-acetyllysine. The tract at residues 318-325 (KTKDGQIL) is required for interaction with RAC1. Thr-342 bears the Phosphothreonine mark. Position 377 is an N6-acetyllysine (Lys-377). The span at 502 to 515 (DESETEKEKIKKLP) shows a compositional bias: basic and acidic residues. Residues 502–522 (DESETEKEKIKKLPEYNPRTL) form a disordered region.

As to quaternary structure, interacts with RAC1. Interacts with nucleotide-free and with GDP and GTP-bound forms of RAC1, with a slight preference for GDP-bound RAC1. Binds preferentially to the nucleotide-free form of RAC1. Interacts with CORO1C. Interacts with microtubules.

The protein resides in the nucleus. Its subcellular location is the nucleolus. The protein localises to the cytoplasm. It is found in the cytoskeleton. It localises to the chromosome. The protein resides in the centromere. Its subcellular location is the spindle. The protein localises to the midbody. It is found in the cell membrane. In terms of biological role, multifunctional protein that may affect its functions by regulating the activity of small GTPases, such as RAC1 and RALA. Required for normal progress through the cell cycle, both during interphase and during mitosis. Required for the presence of normal levels of MAD2L1, AURKB and BIRC5 on inner centromeres during mitosis, and for normal attachment of kinetochores to mitotic spindles. Required for normal organization of the microtubule cytoskeleton in interphase cells. Functions as guanine nucleotide exchange factor (GEF) for RALA. Interferes with the activation of RAC1 by guanine nucleotide exchange factors. Prevents accumulation of active, GTP-bound RAC1, and suppresses RAC1-mediated reorganization of the actin cytoskeleton and formation of membrane protrusions. Required for normal cellular responses to contacts with the extracellular matrix of adjacent cells, and for directional cell migration in response to a fibronectin gradient (in vitro). This is Protein RCC2 (RCC2) from Homo sapiens (Human).